The primary structure comprises 508 residues: Light-independent protochlorophyllide reductase subunit B (508 aa).

Asp-36 is a [4Fe-4S] cluster binding site. Asp-294 serves as the catalytic Proton donor. Gly-429 to Met-430 contacts substrate.

The protein belongs to the ChlB/BchB/BchZ family. As to quaternary structure, protochlorophyllide reductase is composed of three subunits; ChlL, ChlN and ChlB. Forms a heterotetramer of two ChlB and two ChlN subunits. It depends on [4Fe-4S] cluster as a cofactor.

The enzyme catalyses chlorophyllide a + oxidized 2[4Fe-4S]-[ferredoxin] + 2 ADP + 2 phosphate = protochlorophyllide a + reduced 2[4Fe-4S]-[ferredoxin] + 2 ATP + 2 H2O. The protein operates within porphyrin-containing compound metabolism; chlorophyll biosynthesis (light-independent). Its function is as follows. Component of the dark-operative protochlorophyllide reductase (DPOR) that uses Mg-ATP and reduced ferredoxin to reduce ring D of protochlorophyllide (Pchlide) to form chlorophyllide a (Chlide). This reaction is light-independent. The NB-protein (ChlN-ChlB) is the catalytic component of the complex. In Nostoc sp. (strain PCC 7120 / SAG 25.82 / UTEX 2576), this protein is Light-independent protochlorophyllide reductase subunit B.